The primary structure comprises 125 residues: Large ribosomal subunit protein bL12 (125 aa).

This sequence belongs to the bacterial ribosomal protein bL12 family. Homodimer. Part of the ribosomal stalk of the 50S ribosomal subunit. Forms a multimeric L10(L12)X complex, where L10 forms an elongated spine to which 2 to 4 L12 dimers bind in a sequential fashion. Binds GTP-bound translation factors.

Forms part of the ribosomal stalk which helps the ribosome interact with GTP-bound translation factors. Is thus essential for accurate translation. The polypeptide is Large ribosomal subunit protein bL12 (Mesorhizobium japonicum (strain LMG 29417 / CECT 9101 / MAFF 303099) (Mesorhizobium loti (strain MAFF 303099))).